The sequence spans 132 residues: Z-ring associated protein G (132 aa).

The helical transmembrane segment at Met1–Met21 threads the bilayer. Residues Phe95–Asp132 form a disordered region.

This sequence belongs to the ZapG family.

The protein localises to the cell inner membrane. Functionally, involved in cell division, cell envelope biogenesis and cell shape maintenance. This Escherichia coli O157:H7 protein is Z-ring associated protein G.